We begin with the raw amino-acid sequence, 397 residues long: Acetate kinase 1 (397 aa).

Asn-8 lines the Mg(2+) pocket. Lys-15 is an ATP binding site. Arg-89 serves as a coordination point for substrate. The active-site Proton donor/acceptor is Asp-146. ATP is bound by residues 206–210 (HLGNG), 281–283 (DFR), and 329–333 (GVGEN). Glu-380 contributes to the Mg(2+) binding site.

This sequence belongs to the acetokinase family. Homodimer. The cofactor is Mg(2+). It depends on Mn(2+) as a cofactor.

The protein resides in the cytoplasm. The enzyme catalyses acetate + ATP = acetyl phosphate + ADP. The protein operates within metabolic intermediate biosynthesis; acetyl-CoA biosynthesis; acetyl-CoA from acetate: step 1/2. In terms of biological role, catalyzes the formation of acetyl phosphate from acetate and ATP. Can also catalyze the reverse reaction. The sequence is that of Acetate kinase 1 from Listeria monocytogenes serotype 4b (strain F2365).